A 383-amino-acid chain; its full sequence is Inactive serine protease 54 (383 aa).

Positions 1-20 (MAEMRGMLLMLLYISHSSSA) are cleaved as a signal peptide. Residues 21–258 (ICGIQKATIA…YSDWITAKTR (238 aa)) form the Peptidase S1 domain. Asn113 carries N-linked (GlcNAc...) asparagine glycosylation. 3 cysteine pairs are disulfide-bonded: Cys154-Cys216, Cys185-Cys195, and Cys206-Cys237. Positions 305–334 (QGQRMSTKSNKQKDAGQNFRVNRQPETSGP) are disordered. The segment covering 323 to 334 (FRVNRQPETSGP) has biased composition (polar residues).

This sequence belongs to the peptidase S1 family. Plasma kallikrein subfamily.

Its subcellular location is the secreted. This chain is Inactive serine protease 54 (Prss54), found in Mus musculus (Mouse).